A 300-amino-acid chain; its full sequence is Eukaryotic translation initiation factor 3 subunit F (300 aa).

The region spanning 33 to 169 (VKVHPVALFS…VQCYVSALLG (137 aa)) is the MPN domain.

It belongs to the eIF-3 subunit F family. As to quaternary structure, component of the eukaryotic translation initiation factor 3 (eIF-3) complex.

Its subcellular location is the cytoplasm. In terms of biological role, component of the eukaryotic translation initiation factor 3 (eIF-3) complex, which is involved in protein synthesis of a specialized repertoire of mRNAs and, together with other initiation factors, stimulates binding of mRNA and methionyl-tRNAi to the 40S ribosome. The eIF-3 complex specifically targets and initiates translation of a subset of mRNAs involved in cell proliferation. This chain is Eukaryotic translation initiation factor 3 subunit F, found in Malassezia globosa (strain ATCC MYA-4612 / CBS 7966) (Dandruff-associated fungus).